A 455-amino-acid chain; its full sequence is UDP-N-acetylmuramoylalanine--D-glutamate ligase (455 aa).

Position 118 to 124 (118 to 124) interacts with ATP; it reads GSNAKST.

This sequence belongs to the MurCDEF family.

The protein localises to the cytoplasm. It carries out the reaction UDP-N-acetyl-alpha-D-muramoyl-L-alanine + D-glutamate + ATP = UDP-N-acetyl-alpha-D-muramoyl-L-alanyl-D-glutamate + ADP + phosphate + H(+). Its pathway is cell wall biogenesis; peptidoglycan biosynthesis. Functionally, cell wall formation. Catalyzes the addition of glutamate to the nucleotide precursor UDP-N-acetylmuramoyl-L-alanine (UMA). The protein is UDP-N-acetylmuramoylalanine--D-glutamate ligase of Chromohalobacter salexigens (strain ATCC BAA-138 / DSM 3043 / CIP 106854 / NCIMB 13768 / 1H11).